We begin with the raw amino-acid sequence, 107 residues long: UPF0145 protein Memar_1285 (107 aa).

Belongs to the UPF0145 family.

In Methanoculleus marisnigri (strain ATCC 35101 / DSM 1498 / JR1), this protein is UPF0145 protein Memar_1285.